The primary structure comprises 294 residues: MNFFQAIFLGLVQALTEYLPVSSSAHIRIIGDLMLGSDPGAAFTAIIQIGTELAVILYFRHDIIRILGAWFGSLFGKEGKDFKSRMGAHNRDTQMGWFIIIGTLPILIAGLLFKDAIESTLRNLWITVTVLIIFGILLWVVDARAKQVKTMDEMTWKDALIFGIGQMLALIPGVSRSGGTITFGRAMGYTREAAVRVSFLMAIPAVFGAGILEAVSAVKDVAAGNAGMFPGWGATIAATIVAFVVGYVVIIGFLKFVSTFSYKAFAIYRIALAVVVALLLICGVLHPTEVVAAA.

The next 6 membrane-spanning stretches (helical) occupy residues proline 39 to phenylalanine 59, threonine 93 to phenylalanine 113, asparagine 123 to alanine 143, valine 197 to alanine 217, alanine 234 to leucine 254, and phenylalanine 265 to leucine 285.

This sequence belongs to the UppP family.

It localises to the cell membrane. The enzyme catalyses di-trans,octa-cis-undecaprenyl diphosphate + H2O = di-trans,octa-cis-undecaprenyl phosphate + phosphate + H(+). Catalyzes the dephosphorylation of undecaprenyl diphosphate (UPP). Confers resistance to bacitracin. The sequence is that of Undecaprenyl-diphosphatase from Bifidobacterium adolescentis (strain ATCC 15703 / DSM 20083 / NCTC 11814 / E194a).